Consider the following 122-residue polypeptide: UPF0102 protein CPE1705 (122 aa).

The protein belongs to the UPF0102 family.

The chain is UPF0102 protein CPE1705 from Clostridium perfringens (strain 13 / Type A).